Consider the following 360-residue polypeptide: MKLLTFPGQGTSISISILKAIIRNKSREFQTILSQNGKESNDLLQYIFQNPSSPGSIAVCSNLFYQLYQILSNPSDPQDQAPKNMTKIDSPDKKDNEQCYLLGHSLGELTCLSVNSLFSLKDLFDIANFRNKLMVTSTEKYLVAHNINRSNKFEMWALSSPRATDLPQEVQKLLNSPNLLSSSQNTISVANANSVKQCVVTGLVDDLESLRTELNLRFPRLRITELTNPYNIPFHNSTVLRPVQEPLYDYIWDILKKNGTHTLMELNHPIIANLDGNISYYIHHALDRFVKCSSRTVQFTMCYDTINSGTPVEIDKSICFGPGNVIYNLIRRNCPQVDTIEYTSLATIDAYHKAAEENKD.

The N-terminal 24 residues, 1–24, are a transit peptide targeting the mitochondrion; the sequence is MKLLTFPGQGTSISISILKAIIRN. Catalysis depends on residues S105 and H235.

The protein belongs to the FabD family.

The protein localises to the mitochondrion. It catalyses the reaction holo-[ACP] + malonyl-CoA = malonyl-[ACP] + CoA. Its pathway is lipid metabolism; fatty acid biosynthesis. In terms of biological role, involved in biosynthesis of fatty acids in mitochondria. The protein is Malonyl CoA-acyl carrier protein transacylase, mitochondrial (MCT1) of Saccharomyces cerevisiae (strain ATCC 204508 / S288c) (Baker's yeast).